The sequence spans 330 residues: PDZ and LIM domain protein 4 (330 aa).

One can recognise a PDZ domain in the interval 1 to 84; that stretch reads MTHAVTLRGP…HLTLSVSRPE (84 aa). Disordered regions lie at residues 104–154 and 219–239; these read DPEA…NEVT and EAGE…KPAA. Phosphoserine is present on residues Ser-111, Ser-115, Ser-118, Ser-119, Ser-124, and Ser-134. Over residues 111–122 the composition is skewed to polar residues; that stretch reads SPATSRRSSISG. One can recognise an LIM zinc-binding domain in the interval 255–305; sequence CTRCGHGIVGTIVKARDKLYHPECFMCSDCGLNLKQRGYFFLDERLYCENH.

In terms of assembly, homodimer. Interacts (via C-terminus only or via combined C-terminus and LIM domain, but not LIM domain only) with PTPN13 (via the second or fourth PDZ domains). Found in a complex with PTPN13 and TRIP6. Interacts (via PDZ domain) with ACTN1 and ACTN2 (via C-terminal SDL residues). Interacts (via PDZ domain) with TRIP6 (via the second LIM domain or via the third LIM domain plus C-terminus). Interacts (via LIM domain) with GRIA1 (via C-terminus); this interaction as well as the interaction with alpha-actinin is required for their colocalization in early endosomes. Interacts with PDLIM1. Forms (via LIM domain) a heterodimer with PDLIM3. Interacts directly with SRC (via kinase domain and to a lesser extent the SH2 domain). Post-translationally, phosphorylated on tyrosine residue(s). Can be dephosphorylated by PTPN13. In terms of tissue distribution, detected in several tissues, most prominent in brain and heart of adults. Expressed in embryonic fibroblasts.

It is found in the cytoplasm. The protein localises to the cytoskeleton. The protein resides in the cell projection. Its subcellular location is the dendritic spine. It localises to the early endosome membrane. It is found in the recycling endosome membrane. The protein localises to the nucleus. The protein resides in the perinuclear region. Its subcellular location is the lamellipodium. It localises to the synapse. It is found in the synaptosome. Functionally, suppresses SRC activation by recognizing and binding to active SRC and facilitating PTPN13-mediated dephosphorylation of SRC 'Tyr-419' leading to its inactivation. Inactivated SRC dissociates from this protein allowing the initiation of a new SRC inactivation cycle. Involved in reorganization of the actin cytoskeleton. In nonmuscle cells, binds to ACTN1 (alpha-actinin-1), increases the affinity of ACTN1 to F-actin (filamentous actin), and promotes formation of actin stress fibers. Involved in regulation of the synaptic AMPA receptor transport in dendritic spines of hippocampal pyramidal neurons directing the receptors toward an insertion at the postsynaptic membrane. Links endosomal surface-internalized GRIA1-containing AMPA receptors to the alpha-actinin/actin cytoskeleton. Increases AMPA receptor-mediated excitatory postsynaptic currents in neurons. The polypeptide is PDZ and LIM domain protein 4 (Pdlim4) (Rattus norvegicus (Rat)).